Consider the following 520-residue polypeptide: Solute carrier family 2, facilitated glucose transporter member 14 (520 aa).

The Cytoplasmic segment spans residues 1 to 29; sequence MEFHNGGHVSGIGGFLVSLTSRMKPHTLA. The chain crosses the membrane as a helical span at residues 30–50; sequence VTPALIFAITVATIGSFQFGY. Over 51 to 88 the chain is Extracellular; that stretch reads NTGVINAPETIIKEFINKTLTDKANAPPSEVLLTNLWS. N-linked (GlcNAc...) asparagine glycosylation is present at Asn67. The helical transmembrane segment at 89–109 threads the bilayer; sequence LSVAIFSVGGMIGSFSVGLFV. Residues 110 to 117 lie on the Cytoplasmic side of the membrane; it reads NRFGRRNS. A helical membrane pass occupies residues 118–138; it reads MLIVNLLAATGGCLMGLCKIA. The Extracellular segment spans residues 139–148; sequence ESVEMLILGR. A helical membrane pass occupies residues 149–169; sequence LVIGLFCGLCTGFVPMYIGEI. The Cytoplasmic portion of the chain corresponds to 170–177; sequence SPTALRGA. The helical transmembrane segment at 178 to 198 threads the bilayer; the sequence is FGTLNQLGIVIGILVAQIFGL. Residue Gln183 coordinates D-glucose. Topologically, residues 199–207 are extracellular; the sequence is ELILGSEEL. A helical transmembrane segment spans residues 208–228; the sequence is WPVLLGFTILPAILQSAALPC. The Cytoplasmic portion of the chain corresponds to 229–293; that stretch reads CPESPRFLLI…LFRVSSYRQP (65 aa). Residues 294-314 form a helical membrane-spanning segment; the sequence is IIISIVLQLSQQLSGINAVFY. D-glucose is bound by residues 304–305 and Asn310; that span reads QQ. The Extracellular segment spans residues 315-328; it reads YSTGIFKDAGVQQP. Residues 329–349 form a helical membrane-spanning segment; it reads IYATISAGVVNTIFTLLSLFL. D-glucose is bound at residue Asn339. The Cytoplasmic portion of the chain corresponds to 350 to 358; it reads VERAGRRTL. The chain crosses the membrane as a helical span at residues 359-379; that stretch reads HMIGLGGMAFCSTLMTVSLLL. The Extracellular portion of the chain corresponds to 380 to 392; sequence KNHYNGMSFVCIG. The chain crosses the membrane as a helical span at residues 393–413; that stretch reads AILVFVACFEIGPGPIPWFIV. D-glucose is bound by residues Glu402 and Trp410. Residues 414 to 423 are Cytoplasmic-facing; the sequence is AELFSQGPRP. Residues 424–444 traverse the membrane as a helical segment; sequence AAMAVAGCSNWTSNFLVGLLF. The Extracellular portion of the chain corresponds to 445 to 451; sequence PSAAYYL. A helical transmembrane segment spans residues 452–472; that stretch reads GAYVFIIFTGFLITFLAFTFF. The Cytoplasmic segment spans residues 473–520; the sequence is KVPETRGRTFEDITRAFEGQAHGADRSGKDGVMGMNSIEPAKETTTNV. Residues 493–520 are disordered; sequence AHGADRSGKDGVMGMNSIEPAKETTTNV.

Belongs to the major facilitator superfamily. Sugar transporter (TC 2.A.1.1) family. Glucose transporter subfamily. As to expression, mainly expressed in testis. Also expressed in small intestine, liver and kidney.

The protein resides in the cell membrane. The enzyme catalyses D-glucose(out) = D-glucose(in). It catalyses the reaction L-dehydroascorbate(out) = L-dehydroascorbate(in). Its function is as follows. Hexose transporter that can mediate the transport of glucose and dehydroascorbate across the cell membrane. This is Solute carrier family 2, facilitated glucose transporter member 14 from Homo sapiens (Human).